The primary structure comprises 880 residues: Translation initiation factor IF-2 (880 aa).

Basic and acidic residues-rich tracts occupy residues 34 to 43, 59 to 69, 82 to 94, 110 to 131, 167 to 181, 230 to 240, and 248 to 261; these read HMSSLDDKQV, TEKDSKNSSRK, RRRD…DNRH, NRRE…DLLN, KKVE…EKLE, QKEETKPTRKK, and EVPD…EHSD. Residues 34-297 are disordered; the sequence is HMSSLDDKQV…KERPLPETLV (264 aa). The segment covering 262 to 275 has biased composition (basic residues); the sequence is KARRRRNKKNKRIN. Over residues 276 to 292 the composition is skewed to basic and acidic residues; that stretch reads QSKEVKKQPTQRKERPL. In terms of domain architecture, tr-type G spans 381–550; the sequence is KRPPVVTIMG…LLQADVMELK (170 aa). The interval 390–397 is G1; it reads GHVDHGKT. 390–397 contacts GTP; it reads GHVDHGKT. The interval 415 to 419 is G2; the sequence is GITQR. A G3 region spans residues 436–439; that stretch reads DTPG. GTP is bound by residues 436-440 and 490-493; these read DTPGH and NKID. The segment at 490-493 is G4; sequence NKID. Residues 526–528 form a G5 region; that stretch reads SAK.

The protein belongs to the TRAFAC class translation factor GTPase superfamily. Classic translation factor GTPase family. IF-2 subfamily.

It is found in the cytoplasm. Functionally, one of the essential components for the initiation of protein synthesis. Protects formylmethionyl-tRNA from spontaneous hydrolysis and promotes its binding to the 30S ribosomal subunits. Also involved in the hydrolysis of GTP during the formation of the 70S ribosomal complex. The sequence is that of Translation initiation factor IF-2 from Lactobacillus johnsonii (strain CNCM I-12250 / La1 / NCC 533).